The chain runs to 79 residues: Sulfur carrier protein TusA (79 aa).

Cys17 serves as the catalytic Cysteine persulfide intermediate.

This sequence belongs to the sulfur carrier protein TusA family.

The protein localises to the cytoplasm. In terms of biological role, sulfur carrier protein which probably makes part of a sulfur-relay system. This chain is Sulfur carrier protein TusA, found in Actinobacillus pleuropneumoniae serotype 7 (strain AP76).